Consider the following 304-residue polypeptide: Coenzyme PQQ synthesis protein B (304 aa).

This sequence belongs to the PqqB family.

It functions in the pathway cofactor biosynthesis; pyrroloquinoline quinone biosynthesis. In terms of biological role, may be involved in the transport of PQQ or its precursor to the periplasm. The chain is Coenzyme PQQ synthesis protein B from Pseudomonas aeruginosa (strain ATCC 15692 / DSM 22644 / CIP 104116 / JCM 14847 / LMG 12228 / 1C / PRS 101 / PAO1).